The following is a 338-amino-acid chain: uncharacterized protein (338 aa).

Positions methionine 1–alanine 29 are cleaved as a signal peptide.

It belongs to the aerolysin family.

This is an uncharacterized protein from Staphylococcus aureus (strain Mu50 / ATCC 700699).